The following is a 1052-amino-acid chain: Kruppel-like factor 18 (1052 aa).

C2H2-type zinc fingers lie at residues Y964–H988, Y994–H1018, and Y1024–H1046.

Belongs to the krueppel C2H2-type zinc-finger protein family.

The protein localises to the nucleus. This Homo sapiens (Human) protein is Kruppel-like factor 18.